Consider the following 700-residue polypeptide: Serine/threonine-protein kinase WNK1 (700 aa).

The 258-residue stretch at 24-281 (GRYNEVLGKG…ARELLDDPFL (258 aa)) folds into the Protein kinase domain. Residues 104–107 (TELF) and Lys-154 each bind ATP. Asp-171 serves as the catalytic Proton acceptor. Residues 314–339 (NYPSNSSSLNRQYSNGNYPSNSSSLN) are compositionally biased toward low complexity. Disordered stretches follow at residues 314-345 (NYPSNSSSLNRQYSNGNYPSNSSSLNRQYSNG), 551-575 (ESRELSSIDSGHNHSEEEEEEEVLY), and 647-666 (ESGEEVEISPKDGFLGSVSG). Basic and acidic residues predominate over residues 551 to 565 (ESRELSSIDSGHNHS). The span at 566 to 575 (EEEEEEEVLY) shows a compositional bias: acidic residues.

Belongs to the protein kinase superfamily. Ser/Thr protein kinase family. WNK subfamily. In terms of processing, autophosphorylated.

It catalyses the reaction L-seryl-[protein] + ATP = O-phospho-L-seryl-[protein] + ADP + H(+). It carries out the reaction L-threonyl-[protein] + ATP = O-phospho-L-threonyl-[protein] + ADP + H(+). Its function is as follows. Regulates flowering time by modulating the photoperiod pathway. Phosphorylates APRR3. The sequence is that of Serine/threonine-protein kinase WNK1 (WNK1) from Arabidopsis thaliana (Mouse-ear cress).